Consider the following 259-residue polypeptide: Virion protein US10 homolog (259 aa).

A zinc finger lies at 162-174 (CAHWCCLGHAFGC).

Belongs to the herpesviridae US10 family. Phosphorylated.

It is found in the virion tegument. The protein localises to the host nucleus matrix. This Equine herpesvirus 4 (strain 1942) (EHV-4) protein is Virion protein US10 homolog.